We begin with the raw amino-acid sequence, 513 residues long: ATP synthase subunit alpha (513 aa).

169–176 (GDRQTGKT) is a binding site for ATP.

Belongs to the ATPase alpha/beta chains family. In terms of assembly, F-type ATPases have 2 components, CF(1) - the catalytic core - and CF(0) - the membrane proton channel. CF(1) has five subunits: alpha(3), beta(3), gamma(1), delta(1), epsilon(1). CF(0) has three main subunits: a(1), b(2) and c(9-12). The alpha and beta chains form an alternating ring which encloses part of the gamma chain. CF(1) is attached to CF(0) by a central stalk formed by the gamma and epsilon chains, while a peripheral stalk is formed by the delta and b chains.

Its subcellular location is the cell inner membrane. It carries out the reaction ATP + H2O + 4 H(+)(in) = ADP + phosphate + 5 H(+)(out). Produces ATP from ADP in the presence of a proton gradient across the membrane. The alpha chain is a regulatory subunit. The chain is ATP synthase subunit alpha from Cupriavidus necator (strain ATCC 17699 / DSM 428 / KCTC 22496 / NCIMB 10442 / H16 / Stanier 337) (Ralstonia eutropha).